Reading from the N-terminus, the 225-residue chain is Large ribosomal subunit protein eL15 (225 aa).

The interval 159 to 180 (RPFRGLTSAGKKMRGLRKSRGL) is disordered. Residues 169–180 (KKMRGLRKSRGL) are compositionally biased toward basic residues.

Belongs to the eukaryotic ribosomal protein eL15 family.

The protein is Large ribosomal subunit protein eL15 (rpl15e) of Aeropyrum pernix (strain ATCC 700893 / DSM 11879 / JCM 9820 / NBRC 100138 / K1).